The primary structure comprises 308 residues: Ribosomal RNA small subunit methyltransferase H (308 aa).

S-adenosyl-L-methionine contacts are provided by residues 31-33 (GGH), aspartate 51, phenylalanine 75, aspartate 97, and glutamine 104.

It belongs to the methyltransferase superfamily. RsmH family.

It is found in the cytoplasm. The enzyme catalyses cytidine(1402) in 16S rRNA + S-adenosyl-L-methionine = N(4)-methylcytidine(1402) in 16S rRNA + S-adenosyl-L-homocysteine + H(+). Functionally, specifically methylates the N4 position of cytidine in position 1402 (C1402) of 16S rRNA. The polypeptide is Ribosomal RNA small subunit methyltransferase H (Tolumonas auensis (strain DSM 9187 / NBRC 110442 / TA 4)).